The sequence spans 451 residues: Phosphoglucosamine mutase (451 aa).

S103 (phosphoserine intermediate) is an active-site residue. Mg(2+) contacts are provided by S103, D243, D245, and D247. Phosphoserine is present on S103.

It belongs to the phosphohexose mutase family. It depends on Mg(2+) as a cofactor. Activated by phosphorylation.

It carries out the reaction alpha-D-glucosamine 1-phosphate = D-glucosamine 6-phosphate. Its function is as follows. Catalyzes the conversion of glucosamine-6-phosphate to glucosamine-1-phosphate. In Lactiplantibacillus plantarum (strain ATCC BAA-793 / NCIMB 8826 / WCFS1) (Lactobacillus plantarum), this protein is Phosphoglucosamine mutase.